A 393-amino-acid chain; its full sequence is RNA polymerase II holoenzyme cyclin-like subunit (393 aa).

The Cyclin N-terminal domain maps to 51 to 146 (ICKRLNLRQR…LLEEMEFDMV (96 aa)).

It belongs to the cyclin family. Cyclin C subfamily. In terms of assembly, component of the SRB8-11 complex, a regulatory module of the Mediator complex.

The protein localises to the nucleus. Component of the SRB8-11 complex. The SRB8-11 complex is a regulatory module of the Mediator complex which is itself involved in regulation of basal and activated RNA polymerase II-dependent transcription. The SRB8-11 complex may be involved in the transcriptional repression of a subset of genes regulated by Mediator. It may inhibit the association of the Mediator complex with RNA polymerase II to form the holoenzyme complex. The SRB8-11 complex phosphorylates the C-terminal domain (CTD) of the largest subunit of RNA polymerase II. In Mycosarcoma maydis (Corn smut fungus), this protein is RNA polymerase II holoenzyme cyclin-like subunit (SSN8).